The following is a 135-amino-acid chain: Small ribosomal subunit protein uS12 (135 aa).

The disordered stretch occupies residues M1 to K20. Residues R9–K18 show a composition bias toward basic residues.

The protein belongs to the universal ribosomal protein uS12 family. In terms of assembly, part of the 30S ribosomal subunit. Contacts proteins S8 and S17. May interact with IF1 in the 30S initiation complex.

With S4 and S5 plays an important role in translational accuracy. Functionally, interacts with and stabilizes bases of the 16S rRNA that are involved in tRNA selection in the A site and with the mRNA backbone. Located at the interface of the 30S and 50S subunits, it traverses the body of the 30S subunit contacting proteins on the other side and probably holding the rRNA structure together. The combined cluster of proteins S8, S12 and S17 appears to hold together the shoulder and platform of the 30S subunit. This is Small ribosomal subunit protein uS12 from Lactobacillus acidophilus (strain ATCC 700396 / NCK56 / N2 / NCFM).